Reading from the N-terminus, the 96-residue chain is MKITPEQAREALDAWICRPGMTQEQATILITEAFWALKERPNIDVQRVTYEGGAIDQRALGVNRVKIFERWKAIDTRDKREKFTALVPAIMEATTG.

The chain is Protein YdfX (ydfX) from Escherichia coli (strain K12).